A 383-amino-acid polypeptide reads, in one-letter code: Lipoyl synthase, mitochondrial (383 aa).

Over residues 25–34 (STPSLLQTLD) the composition is skewed to polar residues. Residues 25–44 (STPSLLQTLDPSVPSPPAAG) are disordered. [4Fe-4S] cluster contacts are provided by Cys110, Cys115, Cys121, Cys141, Cys145, Cys148, and Ser357. In terms of domain architecture, Radical SAM core spans 126–346 (ETGTATATIM…RALGVEMGFR (221 aa)).

Belongs to the radical SAM superfamily. Lipoyl synthase family. [4Fe-4S] cluster is required as a cofactor.

The protein localises to the mitochondrion. It catalyses the reaction [[Fe-S] cluster scaffold protein carrying a second [4Fe-4S](2+) cluster] + N(6)-octanoyl-L-lysyl-[protein] + 2 oxidized [2Fe-2S]-[ferredoxin] + 2 S-adenosyl-L-methionine + 4 H(+) = [[Fe-S] cluster scaffold protein] + N(6)-[(R)-dihydrolipoyl]-L-lysyl-[protein] + 4 Fe(3+) + 2 hydrogen sulfide + 2 5'-deoxyadenosine + 2 L-methionine + 2 reduced [2Fe-2S]-[ferredoxin]. It participates in protein modification; protein lipoylation via endogenous pathway; protein N(6)-(lipoyl)lysine from octanoyl-[acyl-carrier-protein]: step 2/2. In terms of biological role, catalyzes the radical-mediated insertion of two sulfur atoms into the C-6 and C-8 positions of the octanoyl moiety bound to the lipoyl domains of lipoate-dependent enzymes, thereby converting the octanoylated domains into lipoylated derivatives. This chain is Lipoyl synthase, mitochondrial, found in Zea mays (Maize).